We begin with the raw amino-acid sequence, 198 residues long: Pyridoxal 5'-phosphate synthase subunit PdxT (198 aa).

Residue 52-54 (GES) coordinates L-glutamine. Catalysis depends on Cys84, which acts as the Nucleophile. Residues Arg116 and 143-144 (IR) each bind L-glutamine. Active-site charge relay system residues include His179 and Glu181.

It belongs to the glutaminase PdxT/SNO family. In terms of assembly, in the presence of PdxS, forms a dodecamer of heterodimers. Only shows activity in the heterodimer.

The catalysed reaction is aldehydo-D-ribose 5-phosphate + D-glyceraldehyde 3-phosphate + L-glutamine = pyridoxal 5'-phosphate + L-glutamate + phosphate + 3 H2O + H(+). It carries out the reaction L-glutamine + H2O = L-glutamate + NH4(+). It participates in cofactor biosynthesis; pyridoxal 5'-phosphate biosynthesis. Catalyzes the hydrolysis of glutamine to glutamate and ammonia as part of the biosynthesis of pyridoxal 5'-phosphate. The resulting ammonia molecule is channeled to the active site of PdxS. The protein is Pyridoxal 5'-phosphate synthase subunit PdxT of Caldivirga maquilingensis (strain ATCC 700844 / DSM 13496 / JCM 10307 / IC-167).